Consider the following 257-residue polypeptide: 1-(5-phosphoribosyl)-5-[(5-phosphoribosylamino)methylideneamino] imidazole-4-carboxamide isomerase (257 aa).

It belongs to the HisA/HisF family.

It is found in the cytoplasm. It carries out the reaction 1-(5-phospho-beta-D-ribosyl)-5-[(5-phospho-beta-D-ribosylamino)methylideneamino]imidazole-4-carboxamide = 5-[(5-phospho-1-deoxy-D-ribulos-1-ylimino)methylamino]-1-(5-phospho-beta-D-ribosyl)imidazole-4-carboxamide. The protein operates within amino-acid biosynthesis; L-histidine biosynthesis; L-histidine from 5-phospho-alpha-D-ribose 1-diphosphate: step 4/9. This Neurospora crassa (strain ATCC 24698 / 74-OR23-1A / CBS 708.71 / DSM 1257 / FGSC 987) protein is 1-(5-phosphoribosyl)-5-[(5-phosphoribosylamino)methylideneamino] imidazole-4-carboxamide isomerase (his-7).